Reading from the N-terminus, the 202-residue chain is MTEERTADNKAAKAASFKRHGSRYKARRRAVDILFEAEFRDIDPVEIVEERISLAKDSANQVKPVPEYTQQIVPGVATNLDALDEAIALHLSSDWQLDRLPAVDRAVLRVAAWELKFNDDVPPQVAVVEGVELASEYSHDKAPSYIHAVLDGINKDLQLQADLKIADASAAKRAEQAEQPGQAESDELDGLLDGVVQESDEA.

Residues Met-1–Ala-11 show a composition bias toward basic and acidic residues. Disordered regions lie at residues Met-1 to Gly-21 and Ser-169 to Ala-202.

Belongs to the NusB family.

Its function is as follows. Involved in transcription antitermination. Required for transcription of ribosomal RNA (rRNA) genes. Binds specifically to the boxA antiterminator sequence of the ribosomal RNA (rrn) operons. The sequence is that of Transcription antitermination protein NusB from Corynebacterium jeikeium (strain K411).